The chain runs to 1274 residues: Myosin-binding protein C, cardiac-type (1274 aa).

Met1 carries the post-translational modification N-acetylmethionine. The region spanning Pro8 to Thr95 is the Ig-like C2-type 1 domain. The residue at position 47 (Ser47) is a Phosphoserine. Basic and acidic residues predominate over residues Thr95–Glu104. Residues Thr95–Ala153 are disordered. Thr117 carries the post-translational modification Phosphothreonine. Positions Leu128–Gly149 are enriched in polar residues. One can recognise an Ig-like C2-type 2 domain in the interval Pro157–Thr259. Positions 212, 214, 227, and 229 each coordinate Zn(2+). Ser279 is subject to Phosphoserine. Residue Thr287 is modified to Phosphothreonine; by PKA and PKC. At Ser288 the chain carries Phosphoserine. The residue at position 307 (Ser307) is a Phosphoserine; by PKA. Residues Ser312 and Ser427 each carry the phosphoserine modification. Ig-like C2-type domains follow at residues Lys361–Pro452 and Pro452–Glu546. Cysteines 436 and 443 form a disulfide. Phosphoserine occurs at positions 459 and 550. Phosphothreonine is present on Thr607. Residues Pro645–Thr765 form the Ig-like C2-type 5 domain. Fibronectin type-III domains lie at Ala774–Pro870 and Glu872–Ile967. The 89-residue stretch at Pro971–Val1059 folds into the Ig-like C2-type 6 domain. Residues Pro1068 to Pro1163 form the Fibronectin type-III 3 domain. In terms of domain architecture, Ig-like C2-type 7 spans Pro1181 to Glu1269. Position 1241 is an omega-N-methylarginine (Arg1241).

Belongs to the immunoglobulin superfamily. MyBP family. Post-translationally, substrate for phosphorylation by PKA and PKC. Reversible phosphorylation appears to modulate contraction. In terms of processing, polyubiquitinated.

Functionally, thick filament-associated protein located in the crossbridge region of vertebrate striated muscle a bands. In vitro it binds MHC, F-actin and native thin filaments, and modifies the activity of actin-activated myosin ATPase. It may modulate muscle contraction or may play a more structural role. This chain is Myosin-binding protein C, cardiac-type (Mybpc3), found in Rattus norvegicus (Rat).